Here is a 500-residue protein sequence, read N- to C-terminus: MQVLILLSLAFLASCVVAYSRRRPGGRGAGDLPPGPPRLPIIGNMLQLGQNPHKSLAHLAKTYGPLMSLKLGNQFVVVVSSPEMAREVLQRHGLVFSRPFTPIAVQILGHGEVSMNMLPATSPIWKKIRKIAREKLFSNQALHATRAVRRERLRKLADYVGRCSGAMNVGEATFTTMSNLMFATLFSVEITQYADSDSDSGVNKKFREHVNAITRYMGVPNIADFFPIFAPFDPQGLRRKLTYHLGSLLELVQSLIEQRLRARNAATYRKKDDFLEMLLDLSEGDEYDLSVNEIKHLCVDLIIAGSDTSAATTEWAMVELLLHPDKLAKLKAELKSVVGDKSIIEESDISKLPYLQATVKEVLRYHPAAPLLAPHLAEEETQLNGYIIPKNTKIFINDWTISRDPSIWKNPEMFEPERFLNNDIDFCGQHFELIPFGSGRRICPGLPLASRMLHCMVATLCHNFDWELEKGTESKQLQREDVFGLALQKKIPLRAIPIKV.

A helical membrane pass occupies residues 4-24; that stretch reads LILLSLAFLASCVVAYSRRRP. Cys443 provides a ligand contact to heme.

The protein belongs to the cytochrome P450 family. Heme serves as cofactor. As to expression, expressed in leaf glandular trichomes.

The protein resides in the membrane. The catalysed reaction is 11-hydroxyferruginol + 3 reduced [NADPH--hemoprotein reductase] + 3 O2 = carnosate + 3 oxidized [NADPH--hemoprotein reductase] + 4 H2O + 4 H(+). The enzyme catalyses miltiradiene + 2 reduced [NADPH--hemoprotein reductase] + 2 O2 = miltiradien-20-al + 2 oxidized [NADPH--hemoprotein reductase] + 3 H2O + 2 H(+). It catalyses the reaction ferruginol + 3 reduced [NADPH--hemoprotein reductase] + 3 O2 = pisiferate + 3 oxidized [NADPH--hemoprotein reductase] + 4 H2O + 4 H(+). The protein operates within secondary metabolite biosynthesis; terpenoid biosynthesis. In terms of biological role, monooxygenase involved in the biosynthesis of carnosate, a potent antioxidant labdane-related diterpene natural product. Catalyzes the oxidation of 11-hydroxyferruginol to produce carnosate. Mediates the conversion of miltiradien into miltiradien-20-al. Also involved in the production of pisiferic acid and derivative products from ferruginol. The chain is Carnosic acid synthase from Salvia pomifera (Apple sage).